A 142-amino-acid chain; its full sequence is Transcriptional regulator MraZ (142 aa).

2 consecutive SpoVT-AbrB domains span residues 5–51 (ASAL…PRPE) and 77–120 (AADV…DAAT).

The protein belongs to the MraZ family. Forms oligomers.

It localises to the cytoplasm. The protein resides in the nucleoid. The chain is Transcriptional regulator MraZ from Ralstonia pickettii (strain 12J).